We begin with the raw amino-acid sequence, 320 residues long: MGRTSKDKRDIFYRLAKEQGWRARSAFKLLQADETFQLLEGLTRAVDLCAAPGSWSQVLAKRLYEPLPPEEREKVKIIAVDLQGMAPIEGVKQLRADISKESTAEAIIEFFGGEKAQIVVSDGAPDSTGMHDFDSYVQGELLLSALSISTFILEEGGSFVSKIYRADRTSRLYTQLKRFFKNVCVFKPSASRNSSIEAFVVAREFCLPDGYKPCNLTTEWHDQPESWVGRKKESPPVVQVPFVAYKGELDSDRTYDLGENYVYKEPVQQPLTAAYQDILQKTSQVNIKYEGIRVIHDEEMLKKWLENDENKSEKLGACVT.

S-adenosyl-L-methionine is bound by residues Gly-53, Trp-55, Asp-81, Asp-97, and Asp-122. Lys-162 functions as the Proton acceptor in the catalytic mechanism.

It belongs to the class I-like SAM-binding methyltransferase superfamily. RNA methyltransferase RlmE family. TRM7 subfamily. As to quaternary structure, interacts with CG33172/WDR6.

The protein resides in the cytoplasm. It carries out the reaction cytidine(32)/guanosine(34) in tRNA + 2 S-adenosyl-L-methionine = 2'-O-methylcytidine(32)/2'-O-methylguanosine(34) in tRNA + 2 S-adenosyl-L-homocysteine + 2 H(+). Methylates the 2'-O-ribose of nucleotides at position 34 of the tRNA anticodon loop of substrate tRNAs. May require WDR6 for methylation of the nucleotide at position 34 of the anticodon loop of substrate tRNAs. Plays a role in neurogenesis. Requisite for RNA-mediated gene silencing. Modifies position 34 in tRNA(Leu(CAA)), tRNA(Leu(CAG)), tRNA(Phe(GAA)), and tRNA(Trp(CCA)). The polypeptide is tRNA (guanosine(34)-2'-O)-methyltransferase (Drosophila melanogaster (Fruit fly)).